The primary structure comprises 372 residues: tRNA-specific 2-thiouridylase MnmA (372 aa).

ATP-binding positions include 16 to 23 and methionine 42; that span reads GMSGGVDS. Residues 102 to 104 are interaction with target base in tRNA; it reads NPD. The active-site Nucleophile is cysteine 107. Cysteine 107 and cysteine 205 are oxidised to a cystine. Glycine 132 is a binding site for ATP. The interval 155 to 157 is interaction with tRNA; it reads KDQ. The active-site Cysteine persulfide intermediate is cysteine 205. Residues 317 to 318 form an interaction with tRNA region; that stretch reads RY.

It belongs to the MnmA/TRMU family.

The protein localises to the cytoplasm. It carries out the reaction S-sulfanyl-L-cysteinyl-[protein] + uridine(34) in tRNA + AH2 + ATP = 2-thiouridine(34) in tRNA + L-cysteinyl-[protein] + A + AMP + diphosphate + H(+). Functionally, catalyzes the 2-thiolation of uridine at the wobble position (U34) of tRNA, leading to the formation of s(2)U34. This chain is tRNA-specific 2-thiouridylase MnmA, found in Shewanella oneidensis (strain ATCC 700550 / JCM 31522 / CIP 106686 / LMG 19005 / NCIMB 14063 / MR-1).